The primary structure comprises 156 residues: Small ribosomal subunit protein uS7 (156 aa).

The protein belongs to the universal ribosomal protein uS7 family. In terms of assembly, part of the 30S ribosomal subunit. Contacts proteins S9 and S11.

One of the primary rRNA binding proteins, it binds directly to 16S rRNA where it nucleates assembly of the head domain of the 30S subunit. Is located at the subunit interface close to the decoding center, probably blocks exit of the E-site tRNA. In Clavibacter michiganensis subsp. michiganensis (strain NCPPB 382), this protein is Small ribosomal subunit protein uS7.